Here is a 48-residue protein sequence, read N- to C-terminus: Small, acid-soluble spore protein O (48 aa).

The disordered stretch occupies residues 1-23 (MTKRKANHVINGMNAAKSQGNGA).

Belongs to the SspO family.

The protein localises to the spore core. In Bacillus pumilus (strain SAFR-032), this protein is Small, acid-soluble spore protein O.